We begin with the raw amino-acid sequence, 1025 residues long: MKFFALFIYRPVATILLSVAITLCGILGFRMLPVAPLPQVDFPVIMVSASLPGASPETMASSVATPLERSLGRIAGVSEMTSSSSLGSTRIILQFDFDRDINGAARDVQAAINAAQSLLPSGMPSRPTYRKANPSDAPIMILTLTSDTYSQGELYDFASTQLAPTISQIDGVGDVDVGGSSLPAVRVGLNPQALFNQGVSLDDVRTAISNANVRKPQGALEDGTHRWQIQTNDELKTAAEYQPLIIHYNNGGAVRLGDVATVTDSVQDVRNAGMTNAKPAILLMIRKLPEANIIQTVDSIRARLPELQSTIPAAIDLQIAQDRSPTIRASLEEVEQTLIISVALVILVVFLFLRSGRATIIPAVAVPVSLIGTFAAMYLCGFSLNNLSLMALTIATGFVVDDAIVVLENIARHLEAGMKPLQAALQGTREVGFTVLSMSLSLVAVFLPLLLMGGLPGRLLREFAVTLSVAIGISLLVSLTLTPMMCGWMLKASKPREQKRLRGFGRMLVALQQGYGKSLKWVLNHTRLVGVVLLGTIALNIWLYISIPKTFFPEQDTGVLMGGIQADQSISFQAMRGKLQDFMKIIRDDPAVDNVTGFTGGSRVNSGMMFITLKPRGERSETAQQIIDRLRKKLAKEPGANLFLMAVQDIRVGGRQANASYQYTLLSDDLAALREWEPKIRKKLATLPELADVNSDQEDNGAEMNLIYDRDTMARLGIDVQAANSLLNNAFGQRQISTIYQPMNQYKVVMEVDPRYTQDISALEKMFVINNEGKAIPLSYFAKWQPANAPLSVNHQGLSAASTISFNLPTGKSLSDASAAIDRAMTQLGVPSTVRGSFAGTAQVFQETMNSQVILIIAAIATVYIVLGILYESYVHPLTILSTLPSAGVGALLALQLFNAPFSLIALIGIMLLIGIVKKNAIMMVDFALEAQRHGNLTPQEAIFQACLLRFRPIMMTTLAALFGALPLVLSGGDGSELRQPLGITIVGGLVMSQLLTLYTTPVVYLFFDRLRLRFSRKPKQAVTE.

Transmembrane regions (helical) follow at residues 3 to 23 (FFALFIYRPVATILLSVAITL), 333 to 353 (EVEQTLIISVALVILVVFLFL), 360 to 380 (IIPAVAVPVSLIGTFAAMYLC), 387 to 407 (LSLMALTIATGFVVDDAIVVL), 431 to 451 (VGFTVLSMSLSLVAVFLPLLL), 463 to 483 (FAVTLSVAIGISLLVSLTLTP), 528 to 548 (LVGVVLLGTIALNIWLYISIP), 853 to 873 (VILIIAAIATVYIVLGILYES), 875 to 895 (VHPLTILSTLPSAGVGALLAL), 897 to 917 (LFNAPFSLIALIGIMLLIGIV), 953 to 973 (PIMMTTLAALFGALPLVLSGG), and 984 to 1004 (ITIVGGLVMSQLLTLYTTPVV).

It belongs to the resistance-nodulation-cell division (RND) (TC 2.A.6) family. MdtC subfamily. In terms of assembly, part of a tripartite efflux system composed of MdtA, MdtB and MdtC. MdtC forms a heteromultimer with MdtB.

Its subcellular location is the cell inner membrane. The MdtABC tripartite complex confers resistance against novobiocin and deoxycholate. In Escherichia coli (strain UTI89 / UPEC), this protein is Multidrug resistance protein MdtC.